Reading from the N-terminus, the 137-residue chain is MARTILAFDFGTYSIGCAVGQDITGTAQGLPSFKAQDGIPNWDQIEKVIKEWQPERLVVGLPLNMDGSEQPLTQRAKKFANRLNGRFNLPVELQDERLTTVSAKAEIFERGGYKALKKDKVDSISACLILESWFEAQ.

Belongs to the YqgF nuclease family.

Its subcellular location is the cytoplasm. Its function is as follows. Could be a nuclease involved in processing of the 5'-end of pre-16S rRNA. The protein is Putative pre-16S rRNA nuclease of Actinobacillus pleuropneumoniae serotype 5b (strain L20).